A 308-amino-acid polypeptide reads, in one-letter code: UDP-N-acetylenolpyruvoylglucosamine reductase (308 aa).

Residues 33–197 enclose the FAD-binding PCMH-type domain; it reads TGGNADFYLS…LEASFNLAPG (165 aa). R176 is a catalytic residue. S226 functions as the Proton donor in the catalytic mechanism. The active site involves E296.

Belongs to the MurB family. The cofactor is FAD.

The protein resides in the cytoplasm. The enzyme catalyses UDP-N-acetyl-alpha-D-muramate + NADP(+) = UDP-N-acetyl-3-O-(1-carboxyvinyl)-alpha-D-glucosamine + NADPH + H(+). Its pathway is cell wall biogenesis; peptidoglycan biosynthesis. Cell wall formation. The protein is UDP-N-acetylenolpyruvoylglucosamine reductase of Staphylococcus carnosus (strain TM300).